A 187-amino-acid chain; its full sequence is Imidazoleglycerol-phosphate dehydratase (187 aa).

It belongs to the imidazoleglycerol-phosphate dehydratase family.

It is found in the cytoplasm. It carries out the reaction D-erythro-1-(imidazol-4-yl)glycerol 3-phosphate = 3-(imidazol-4-yl)-2-oxopropyl phosphate + H2O. It functions in the pathway amino-acid biosynthesis; L-histidine biosynthesis; L-histidine from 5-phospho-alpha-D-ribose 1-diphosphate: step 6/9. The chain is Imidazoleglycerol-phosphate dehydratase from Pyrobaculum calidifontis (strain DSM 21063 / JCM 11548 / VA1).